Consider the following 1822-residue polypeptide: Sperm flagellar protein 2 (1822 aa).

A Calponin-homology (CH) domain is found at 1–105 (MSEILCQWLN…LLYQLYIALQ (105 aa)). Coiled-coil stretches lie at residues 227 to 260 (KALE…KDLQ), 321 to 396 (AHEA…KQAK), 732 to 758 (NQAQ…KAQK), and 871 to 909 (CEKV…LAEL). Disordered regions lie at residues 896-1004 (KEAE…VPQP), 1278-1327 (EEEK…EATP), 1664-1718 (SIPS…NNEK), and 1803-1822 (EHVQ…EEKK). The segment covering 911 to 920 (LPTPPPAPPP) has biased composition (pro residues). Basic and acidic residues-rich tracts occupy residues 921–930 (EPEKEKEIHQ) and 949–968 (PHGK…ETAL). Positions 975–987 (KGKSSGGKVPVKK) are enriched in low complexity. Composition is skewed to basic and acidic residues over residues 1278-1292 (EEEK…KEKS) and 1303-1314 (KEPPKKKQEDKK). Positions 1324 to 1676 (EATPVIVTTE…SAEKTSSTDA (353 aa)) are interaction with IFT20. Residues 1686-1712 (EENAAREERKLKDDTEKREQKDEEIPE) are a coiled coil. Over residues 1688-1708 (NAAREERKLKDDTEKREQKDE) the composition is skewed to basic and acidic residues.

In terms of assembly, interacts (via C-terminus) with IFT20. Interacts with DYNC1I2.

It is found in the cell projection. Its subcellular location is the cilium. The protein resides in the flagellum. It localises to the cytoplasm. The protein localises to the golgi apparatus. Its function is as follows. Required for correct axoneme development in spermatozoa. Important for normal development of the manchette and sperm head morphology. Essential for male fertility. Plays a role in localization of the intraflagellar transport protein IFT20 to the manchette, suggesting function as an adapter for dynein-mediated protein transport during spermatogenesis. Also plays a role in bone growth where it seems to be required for normal osteoblast differentiation. This chain is Sperm flagellar protein 2 (SPEF2), found in Homo sapiens (Human).